We begin with the raw amino-acid sequence, 709 residues long: Twinkle homolog protein, chloroplastic/mitochondrial (709 aa).

Residues 1 to 16 constitute a chloroplast and mitochondrion transit peptide; that stretch reads MRFLLRLPQIHFRKLS. The region spanning 280-385 is the Toprim domain; sequence SEVIIVEGEI…KKSEDEHFKD (106 aa). The Mg(2+) site is built by glutamate 286, aspartate 348, and aspartate 350. Positions 430-698 constitute an SF4 helicase domain; that stretch reads THGHEYGVST…GSYSDSPVTP (269 aa). Position 460–467 (460–467) interacts with ATP; it reads GIPNSGKS.

The cofactor is Mg(2+). As to expression, expressed in young leaves and shoot apex tissues. Detected in developing tissues such as cotyledons, sepals, pistils and inflorescences. Nearly undetectable in mature leaves.

The protein localises to the plastid. Its subcellular location is the chloroplast. The protein resides in the mitochondrion. The catalysed reaction is ATP + H2O = ADP + phosphate + H(+). Its function is as follows. Has both DNA primase and DNA helicase activities and may be involved in organelle DNA replication. Capable of producing RNA primers of 9 to 18 bases from a single-stranded DNA template. The sequence is that of Twinkle homolog protein, chloroplastic/mitochondrial from Arabidopsis thaliana (Mouse-ear cress).